The chain runs to 160 residues: Large ribosomal subunit protein uL16 (160 aa).

Residues 138 to 160 (KNLEAPSQEKTKNSKKSQEEVKQ) are disordered.

The protein belongs to the universal ribosomal protein uL16 family. Part of the 50S ribosomal subunit.

Its function is as follows. Binds 23S rRNA and is also seen to make contacts with the A and possibly P site tRNAs. The polypeptide is Large ribosomal subunit protein uL16 (Prochlorococcus marinus (strain MIT 9215)).